A 332-amino-acid polypeptide reads, in one-letter code: Phosphatidylglycerol--prolipoprotein diacylglyceryl transferase (332 aa).

3 helical membrane-spanning segments follow: residues 18–38 (FPYF…AYIL), 66–86 (FFTW…TMVY), and 111–131 (VGLR…GGGL). Residue arginine 159 coordinates a 1,2-diacyl-sn-glycero-3-phospho-(1'-sn-glycerol). The next 2 helical transmembrane spans lie at 249–269 (GFLV…IEYF) and 302–322 (ILCV…SAYH).

The protein belongs to the Lgt family.

It is found in the cell inner membrane. The enzyme catalyses L-cysteinyl-[prolipoprotein] + a 1,2-diacyl-sn-glycero-3-phospho-(1'-sn-glycerol) = an S-1,2-diacyl-sn-glyceryl-L-cysteinyl-[prolipoprotein] + sn-glycerol 1-phosphate + H(+). Its pathway is protein modification; lipoprotein biosynthesis (diacylglyceryl transfer). Its function is as follows. Catalyzes the transfer of the diacylglyceryl group from phosphatidylglycerol to the sulfhydryl group of the N-terminal cysteine of a prolipoprotein, the first step in the formation of mature lipoproteins. The protein is Phosphatidylglycerol--prolipoprotein diacylglyceryl transferase of Treponema pallidum (strain Nichols).